A 497-amino-acid chain; its full sequence is Peptidoglycan endopeptidase RipA (497 aa).

Positions 1–39 (MRRTVRALATRVHGRVCAVPLVVGMLLATALYGGGPAAA) are cleaved as a signal peptide. Basic and acidic residues predominate over residues 177-192 (ARLAKEKADQAARDAE). Disordered regions lie at residues 177–198 (ARLAKEKADQAARDAESSQDNA) and 253–297 (APAA…GQNW). The span at 255–273 (AAAPAPVPNSAPAPVPGAQ) shows a compositional bias: pro residues. A NlpC/P60 domain is found at 365-497 (REAVEYVIRR…TPYVTRLIEY (133 aa)). Cys-408 functions as the Nucleophile in the catalytic mechanism. The active-site Proton acceptor is the His-457. The active site involves Glu-469.

Belongs to the peptidase C40 family. Monomer.

Its subcellular location is the secreted. Functionally, peptidoglycan endopeptidase that cleaves the bond between D-glutamate and meso-diaminopimelate. Binds and degrades high-molecular weight peptidoglycan. Required for normal separation of daughter cells after cell division and for cell wall integrity. The polypeptide is Peptidoglycan endopeptidase RipA (ripA) (Mycolicibacterium smegmatis (strain ATCC 700084 / mc(2)155) (Mycobacterium smegmatis)).